We begin with the raw amino-acid sequence, 100 residues long: MARKSLIQREKKRQKLEQKYHLIRRSSKKEISKVPSLSEKWKIHGKLESLPRNSAPTRLHRRCFSTGRPRANYRDFGLSGHTLREMVHECLLPGATRSSW.

Belongs to the universal ribosomal protein uS14 family. As to quaternary structure, part of the 30S ribosomal subunit.

It is found in the plastid. Its subcellular location is the chloroplast. Binds 16S rRNA, required for the assembly of 30S particles. In Lotus japonicus (Lotus corniculatus var. japonicus), this protein is Small ribosomal subunit protein uS14c.